A 100-amino-acid chain; its full sequence is Small ribosomal subunit protein uS14c (100 aa).

The protein belongs to the universal ribosomal protein uS14 family. Part of the 30S ribosomal subunit.

The protein resides in the plastid. It is found in the chloroplast. Functionally, binds 16S rRNA, required for the assembly of 30S particles. The sequence is that of Small ribosomal subunit protein uS14c from Porphyra purpurea (Red seaweed).